The chain runs to 397 residues: Multidrug resistance protein MdtH (397 aa).

10 helical membrane passes run 11–31 (WFLA…MPMI), 71–91 (FGAR…FASL), 94–114 (AQSG…GCLF), 137–157 (LLMM…SWLL), 163–183 (YVCL…LLIL), 211–231 (LVLI…IFPI), 242–262 (AVGW…YPLA), 291–311 (FATT…GIVI), 338–358 (LGLA…HDYA), and 366–386 (LPWL…VNCF).

The protein belongs to the major facilitator superfamily. DHA1 family. MdtH (TC 2.A.1.2.21) subfamily.

The protein localises to the cell inner membrane. This is Multidrug resistance protein MdtH from Aeromonas salmonicida (strain A449).